Here is a 1240-residue protein sequence, read N- to C-terminus: ATP-dependent helicase/nuclease subunit A (1240 aa).

The UvrD-like helicase ATP-binding domain occupies 12–485 (SQWTDDQWKA…IDLAKNFRSR (474 aa)). 33–40 (AAAGSGKT) contacts ATP. The 308-residue stretch at 497 to 804 (KQIMGEEVGE…RIMTIHKSKG (308 aa)) folds into the UvrD-like helicase C-terminal domain.

It belongs to the helicase family. AddA subfamily. In terms of assembly, heterodimer of AddA and AddB/RexB. Mg(2+) serves as cofactor.

The catalysed reaction is Couples ATP hydrolysis with the unwinding of duplex DNA by translocating in the 3'-5' direction.. It carries out the reaction ATP + H2O = ADP + phosphate + H(+). Functionally, the heterodimer acts as both an ATP-dependent DNA helicase and an ATP-dependent, dual-direction single-stranded exonuclease. Recognizes the chi site generating a DNA molecule suitable for the initiation of homologous recombination. The AddA nuclease domain is required for chi fragment generation; this subunit has the helicase and 3' -&gt; 5' nuclease activities. In Bacillus cereus (strain AH820), this protein is ATP-dependent helicase/nuclease subunit A.